We begin with the raw amino-acid sequence, 144 residues long: NADH-ubiquinone oxidoreductase chain 6 (144 aa).

The next 5 membrane-spanning stretches (helical) occupy residues 1–21 (MVKVFFVLAVLSSIISYINID), 25–45 (SSFFLIFSLLFSMPVISMSMH), 46–66 (IWFSYFICLLFLSGIFVILVY), 79–99 (YMAVFLLLLSMLYFSPTVLTY), and 108–128 (FYYSIYWFIFCFILVCLLFFM).

The protein belongs to the complex I subunit 6 family.

The protein localises to the mitochondrion membrane. It catalyses the reaction a ubiquinone + NADH + 5 H(+)(in) = a ubiquinol + NAD(+) + 4 H(+)(out). Functionally, core subunit of the mitochondrial membrane respiratory chain NADH dehydrogenase (Complex I) that is believed to belong to the minimal assembly required for catalysis. Complex I functions in the transfer of electrons from NADH to the respiratory chain. The immediate electron acceptor for the enzyme is believed to be ubiquinone. The protein is NADH-ubiquinone oxidoreductase chain 6 of Caenorhabditis elegans.